A 729-amino-acid polypeptide reads, in one-letter code: Sorting nexin mvp1 (729 aa).

Disordered stretches follow at residues 1–43 (MSLF…SANL) and 177–340 (PLPK…EEPN). The region spanning 356–464 (EETVTVNLLP…VMFLTVPTEL (109 aa)) is the PX domain. Residues Arg-392, Ser-394, Lys-418, and Arg-431 each contribute to the a 1,2-diacyl-sn-glycero-3-phospho-(1D-myo-inositol-3-phosphate) site.

The protein belongs to the sorting nexin family.

Its subcellular location is the cytoplasm. The protein resides in the membrane. Required for vacuolar protein sorting. The chain is Sorting nexin mvp1 (mvp1) from Aspergillus fumigatus (strain ATCC MYA-4609 / CBS 101355 / FGSC A1100 / Af293) (Neosartorya fumigata).